The primary structure comprises 118 residues: Small ribosomal subunit protein uS13 (118 aa).

Residues 93–118 (KKLPVRGQRTKTNARTRKGPRKLMKK) form a disordered region.

The protein belongs to the universal ribosomal protein uS13 family. Part of the 30S ribosomal subunit. Forms a loose heterodimer with protein S19. Forms two bridges to the 50S subunit in the 70S ribosome.

Located at the top of the head of the 30S subunit, it contacts several helices of the 16S rRNA. In the 70S ribosome it contacts the 23S rRNA (bridge B1a) and protein L5 of the 50S subunit (bridge B1b), connecting the 2 subunits; these bridges are implicated in subunit movement. Contacts the tRNAs in the A and P-sites. The chain is Small ribosomal subunit protein uS13 from Buchnera aphidicola subsp. Baizongia pistaciae (strain Bp).